Reading from the N-terminus, the 158-residue chain is Ribosome maturation factor RimP (158 aa).

Belongs to the RimP family.

Its subcellular location is the cytoplasm. Required for maturation of 30S ribosomal subunits. This is Ribosome maturation factor RimP from Streptococcus uberis (strain ATCC BAA-854 / 0140J).